The sequence spans 150 residues: MALKSLVLLSLLVLVLLLVRVQPSLGKETAAAKFERQHMDSSTSAASSSNYCNQMMKSRNLTKDRCKPVNTFVHESLADVQAVCSQKNVACKNGQTNCYQSYSTMSITDCRETGSSKYPNCAYKTTQANKHIIVACEGNPYVPVHFDASV.

The signal sequence occupies residues 1 to 26 (MALKSLVLLSLLVLVLLLVRVQPSLG). 2 N-linked (Glc) (glycation) lysine; in vitro glycosylation sites follow: lysine 27 and lysine 33. The substrate site is built by lysine 33 and arginine 36. The active-site Proton acceptor is the histidine 38. 4 cysteine pairs are disulfide-bonded: cysteine 52/cysteine 110, cysteine 66/cysteine 121, cysteine 84/cysteine 136, and cysteine 91/cysteine 98. Asparagine 60 carries N-linked (GlcNAc...) asparagine; partial glycosylation. N-linked (Glc) (glycation) lysine; in vitro glycans are attached at residues lysine 63 and lysine 67. Residues 67–71 (KPVNT), lysine 92, and arginine 111 contribute to the substrate site. The Proton donor role is filled by histidine 145.

It belongs to the pancreatic ribonuclease family. As to quaternary structure, interacts with and forms tight 1:1 complexes with RNH1. Dimerization of two such complexes may occur. Interaction with RNH1 inhibits this protein. Monomer. Pancreas.

The protein resides in the secreted. It carries out the reaction an [RNA] containing cytidine + H2O = an [RNA]-3'-cytidine-3'-phosphate + a 5'-hydroxy-ribonucleotide-3'-[RNA].. The catalysed reaction is an [RNA] containing uridine + H2O = an [RNA]-3'-uridine-3'-phosphate + a 5'-hydroxy-ribonucleotide-3'-[RNA].. Endonuclease that catalyzes the cleavage of RNA on the 3' side of pyrimidine nucleotides. Acts on single-stranded and double-stranded RNA. The chain is Ribonuclease pancreatic (RNASE1) from Bos taurus (Bovine).